We begin with the raw amino-acid sequence, 539 residues long: Serine/threonine-protein kinase 35 (539 aa).

The disordered stretch occupies residues 103–161 (ITIQGPAPPHLGARRRDEARGARAAPLLLPPPPAAMETGKENGARRGTKSPERKRRSPV). Basic residues predominate over residues 148–160 (RGTKSPERKRRSP). The Protein kinase domain occupies 207-535 (YSLLAEIGRG…FELETRMDQV (329 aa)). Residues 213–221 (IGRGSYGVV) and K236 each bind ATP. Residue D365 is the Proton acceptor of the active site.

It belongs to the protein kinase superfamily. Ser/Thr protein kinase family. As to quaternary structure, interacts with PDLIM1/CLP-36. In terms of processing, autophosphorylated.

It localises to the nucleus. Its subcellular location is the nucleolus. It is found in the cytoplasm. It catalyses the reaction L-seryl-[protein] + ATP = O-phospho-L-seryl-[protein] + ADP + H(+). The enzyme catalyses L-threonyl-[protein] + ATP = O-phospho-L-threonyl-[protein] + ADP + H(+). The chain is Serine/threonine-protein kinase 35 (Stk35) from Mus musculus (Mouse).